The following is a 512-amino-acid chain: Amidase 2 (512 aa).

Catalysis depends on charge relay system residues Lys122 and Ser197. Residues Ser197 and 218 to 221 (IGGS) contribute to the substrate site. Ser221 acts as the Acyl-ester intermediate in catalysis.

Belongs to the amidase family.

The catalysed reaction is a monocarboxylic acid amide + H2O = a monocarboxylate + NH4(+). It participates in xenobiotic degradation. Functionally, amidase; part of the Fusarium detoxification of benzoxazolinone cluster 2 (FDB2) involved in the degradation of benzoxazolinones produced by the host plant. Maize, wheat, and rye produce the 2 benzoxazinone phytoanticipins 2,4-dihy-droxy-7-methoxy-1,4-benzoxazin-3-one (DIMBOA) and 2,4-dihydroxy-1,4-benzoxazin-3-one (DIBOA) that, due to their inherent instability once released, spontaneously degrade to the more stable corresponding benzoxazolinones, 6-methoxy-2-benzoxazolinone (MBOA) and 2-benzoxazolinone (BOA), respectively. The first step in the detoxification of benzoxazolinones involves the hydrolysis of the cyclic ester bond of benzoxazolinones by the FDB1 cluster gamma-lactamase MBL1 to aminophenols. MBL1 is able to convert BOA into 2-aminophenol (2-AP), as well as MBOA into 5-methoxy-2-aminophenol (2-AMP). The FDB2 cluster N-malonyltransferase FDB2/NAT1 then metabolizes aminophenols via N-malonylation to non-toxic malonamic acids. FDB2/NAT1 converts 2-AP into N-(2-hydroxyphenyl) malonamic acid (HPMA) and 2-AMP into N-(2-hydroxy-4-methoxyphenyl) malonamic acid (HMPMA). The duplicated dienlactone hydrolases DLH1 and DLH2 may provide redundant function for hydrolyzing the lactone moiety in the BOA molecule. The roles of the amidases an other enzymes encoded by the 2 FDB clusters have not been identified so far. This is Amidase 2 from Gibberella moniliformis (strain M3125 / FGSC 7600) (Maize ear and stalk rot fungus).